Consider the following 690-residue polypeptide: Proprotein convertase subtilisin/kexin type 9 (690 aa).

The first 28 residues, 1–28 (MGTVRSRRLWWPLPLLLLLLLGPAGARA), serve as a signal peptide directing secretion. The propeptide occupies 29–150 (QEDDDGDYEE…IEEDSYVFAQ (122 aa)). At tyrosine 36 the chain carries Sulfotyrosine. A Phosphoserine modification is found at serine 45. The Inhibitor I9 domain maps to 75-147 (TYVVVLKEET…VDYIEEDSYV (73 aa)). One can recognise a Peptidase S8 domain in the interval 153–459 (PWNLERITPA…GWQLFCRTVW (307 aa)). Active-site charge relay system residues include aspartate 184 and histidine 224. Disulfide bonds link cysteine 221–cysteine 253 and cysteine 321–cysteine 356. Catalysis depends on serine 384, which acts as the Charge relay system. Residues 448–690 (GAGWQLFCRT…HLAQASQELQ (243 aa)) form a C-terminal domain region. Intrachain disulfides connect cysteine 455–cysteine 525, cysteine 475–cysteine 524, and cysteine 484–cysteine 507. Asparagine 531 carries N-linked (GlcNAc...) asparagine glycosylation. Disulfide bonds link cysteine 532/cysteine 599, cysteine 550/cysteine 598, cysteine 560/cysteine 586, cysteine 606/cysteine 677, cysteine 624/cysteine 676, and cysteine 633/cysteine 652. Serine 686 is subject to Phosphoserine.

Belongs to the peptidase S8 family. In terms of assembly, monomer. Can self-associate to form dimers and higher multimers which may have increased LDLR degrading activity. The precursor protein but not the mature protein may form multimers. Interacts with APOB, VLDLR, LRP8/APOER2 and BACE1. The full-length immature form (pro-PCSK9) interacts with SCNN1A, SCNN1B and SCNN1G. The pro-PCSK9 form (via C-terminal domain) interacts with LDLR. Interacts (via the C-terminal domain) with ANXA2 (via repeat Annexin 1); the interaction inhibits the degradation of LDLR. It depends on Ca(2+) as a cofactor. Cleavage by furin and PCSK5 generates a truncated inactive protein that is unable to induce LDLR degradation. Post-translationally, undergoes autocatalytic cleavage in the endoplasmic reticulum to release the propeptide from the N-terminus and the cleavage of the propeptide is strictly required for its maturation and activation. The cleaved propeptide however remains associated with the catalytic domain through non-covalent interactions, preventing potential substrates from accessing its active site. As a result, it is secreted from cells as a propeptide-containing, enzymatically inactive protein. In terms of processing, phosphorylation protects the propeptide against proteolysis.

Its subcellular location is the cytoplasm. It localises to the secreted. The protein resides in the endosome. The protein localises to the lysosome. It is found in the cell surface. Its subcellular location is the endoplasmic reticulum. It localises to the golgi apparatus. Its proteolytic activity is autoinhibited by the non-covalent binding of the propeptide to the catalytic domain. Inhibited by EGTA. Its function is as follows. Crucial player in the regulation of plasma cholesterol homeostasis. Binds to low-density lipid receptor family members: low density lipoprotein receptor (LDLR), very low density lipoprotein receptor (VLDLR), apolipoprotein E receptor (LRP1/APOER) and apolipoprotein receptor 2 (LRP8/APOER2), and promotes their degradation in intracellular acidic compartments. Acts via a non-proteolytic mechanism to enhance the degradation of the hepatic LDLR through a clathrin LDLRAP1/ARH-mediated pathway. May prevent the recycling of LDLR from endosomes to the cell surface or direct it to lysosomes for degradation. Can induce ubiquitination of LDLR leading to its subsequent degradation. Inhibits intracellular degradation of APOB via the autophagosome/lysosome pathway in a LDLR-independent manner. Involved in the disposal of non-acetylated intermediates of BACE1 in the early secretory pathway. Inhibits epithelial Na(+) channel (ENaC)-mediated Na(+) absorption by reducing ENaC surface expression primarily by increasing its proteasomal degradation. Regulates neuronal apoptosis via modulation of LRP8/APOER2 levels and related anti-apoptotic signaling pathways. The sequence is that of Proprotein convertase subtilisin/kexin type 9 (PCSK9) from Lagothrix lagotricha (Brown woolly monkey).